A 23-amino-acid polypeptide reads, in one-letter code: Phallacidin proprotein (23 aa).

Pro-1 is a propeptide. A cross-link (cyclopeptide (Ala-Pro)) is located at residues 2–8 (AWLVDCP). The segment at residues 3–7 (WLVDC) is a cross-link (2'-cysteinyl-6'-hydroxytryptophan sulfoxide (Trp-Cys)). Positions 9 to 23 (CVGDDVNFILTRGQK) are excised as a propeptide.

This sequence belongs to the MSDIN fungal toxin family. Post-translationally, processed by the macrocyclase-peptidase enzyme POPB to yield a toxic cyclic heptapeptide. POPB first removes 10 residues from the N-terminus. Conformational trapping of the remaining peptide forces the enzyme to release this intermediate rather than proceed to macrocyclization. The enzyme rebinds the remaining peptide in a different conformation and catalyzes macrocyclization of the N-terminal 7 residues.

Its function is as follows. Major toxin that belongs to the bicyclic heptapeptides called phallotoxins. Although structurally related to amatoxins, phallotoxins have a different mode of action, which is the stabilization of F-actin. Phallotoxins are poisonous when administered parenterally, but not orally because of poor absorption. The chain is Phallacidin proprotein from Amanita fuligineoides.